The chain runs to 452 residues: MNSGILQVFQRALTCPICMNYFLDPVTIDCGHSFCRPCLYLNWQDTAVLAQCSECKKTTRQRNLNTDICLKNMAFIARKASLRQFLSSEEQICGMHRETKKMFCEVDKSLLCLPCSNSQEHRNHIHCPIEWAAEERREELLKKMQSLWEKACENLRNLNMETTRTRCWKDYVSLRIEAIRAEYQKMPAFLHEEEQHHLERLRKEGEDIFQQLNESKARMEHSRELLRGMYEDLKQMCHKADVELLQAFGDILHRYESLLLQVSEPVNPELSAGPITGLLDSLSGFRVDFTLQPERANSHIFLCGDLRSMNVGCDPQDDPDITGKSECFLVWGAQAFTSGKYYWEVHMGDSWNWAFGVCNNYWKEKRQNDKIDGEEGLFLLGCVKEDTHCSLFTTSPLVVQYVPRPTSTVGLFLDCEGRTVSFVDVDQSSLIYTIPNCSFSPPLRPIFCCSHF.

The RING-type zinc finger occupies 15–56 (CPICMNYFLDPVTIDCGHSFCRPCLYLNWQDTAVLAQCSECK). The B box-type zinc-finger motif lies at 88 to 129 (SEEQICGMHRETKKMFCEVDKSLLCLPCSNSQEHRNHIHCPI). Cys93, His96, Cys115, and His121 together coordinate Zn(2+). The B30.2/SPRY domain occupies 269–452 (ELSAGPITGL…LRPIFCCSHF (184 aa)).

It belongs to the TRIM/RBCC family.

The protein is Tripartite motif-containing protein 51 (TRIM51) of Homo sapiens (Human).